A 438-amino-acid chain; its full sequence is Glutamyl-tRNA(Gln) amidotransferase subunit D (438 aa).

Residues 91–421 (KNLSILSTGG…SEIYEIMKTN (331 aa)) enclose the Asparaginase/glutaminase domain. Catalysis depends on residues T101, T177, D178, and K254.

Belongs to the asparaginase 1 family. GatD subfamily. As to quaternary structure, heterodimer of GatD and GatE.

It catalyses the reaction L-glutamyl-tRNA(Gln) + L-glutamine + ATP + H2O = L-glutaminyl-tRNA(Gln) + L-glutamate + ADP + phosphate + H(+). In terms of biological role, allows the formation of correctly charged Gln-tRNA(Gln) through the transamidation of misacylated Glu-tRNA(Gln) in organisms which lack glutaminyl-tRNA synthetase. The reaction takes place in the presence of glutamine and ATP through an activated gamma-phospho-Glu-tRNA(Gln). The GatDE system is specific for glutamate and does not act on aspartate. The protein is Glutamyl-tRNA(Gln) amidotransferase subunit D of Methanosphaera stadtmanae (strain ATCC 43021 / DSM 3091 / JCM 11832 / MCB-3).